Reading from the N-terminus, the 372-residue chain is uncharacterized protein (372 aa).

The 233-residue stretch at 38–270 (FFIEGGGTKG…ANNIPLDYLI (233 aa)) folds into the PNPLA domain. Residues 42-47 (GGGTKG) carry the GXGXXG motif. The short motif at 74–78 (GTSVG) is the GXSXG element. The active-site Nucleophile is S76. D257 acts as the Proton acceptor in catalysis. The DGA/G motif lies at 257–259 (DGG).

Its function is as follows. Probable lipid hydrolase. This is an uncharacterized protein from Acanthamoeba polyphaga (Amoeba).